The sequence spans 399 residues: uncharacterized protein (399 aa).

The interval 254–335 (SRVSTGDTSP…FFRDSDDDGD (82 aa)) is disordered. A compositionally biased stretch (polar residues) spans 255–264 (RVSTGDTSPY). Over residues 310–329 (RNAEMKKSHSANDSEEFFRD) the composition is skewed to basic and acidic residues.

This is an uncharacterized protein from Xenopus laevis (African clawed frog).